Here is a 210-residue protein sequence, read N- to C-terminus: Large ribosomal subunit protein uL4 (210 aa).

Over residues 47 to 64 (SRQGTRSQKSRSEVSGSN) the composition is skewed to polar residues. The tract at residues 47 to 83 (SRQGTRSQKSRSEVSGSNKKPWRQKGTGRARSGSVKS) is disordered.

It belongs to the universal ribosomal protein uL4 family. In terms of assembly, part of the 50S ribosomal subunit.

Functionally, one of the primary rRNA binding proteins, this protein initially binds near the 5'-end of the 23S rRNA. It is important during the early stages of 50S assembly. It makes multiple contacts with different domains of the 23S rRNA in the assembled 50S subunit and ribosome. Forms part of the polypeptide exit tunnel. This chain is Large ribosomal subunit protein uL4, found in Blochmanniella pennsylvanica (strain BPEN).